Reading from the N-terminus, the 194-residue chain is Potassium-transporting ATPase KdpC subunit (194 aa).

The chain crosses the membrane as a helical span at residues 12 to 34; sequence LFLLLLTGGVYPLLTTALGQWWF.

This sequence belongs to the KdpC family. The system is composed of three essential subunits: KdpA, KdpB and KdpC.

Its subcellular location is the cell inner membrane. Part of the high-affinity ATP-driven potassium transport (or Kdp) system, which catalyzes the hydrolysis of ATP coupled with the electrogenic transport of potassium into the cytoplasm. This subunit acts as a catalytic chaperone that increases the ATP-binding affinity of the ATP-hydrolyzing subunit KdpB by the formation of a transient KdpB/KdpC/ATP ternary complex. This is Potassium-transporting ATPase KdpC subunit from Salmonella schwarzengrund (strain CVM19633).